We begin with the raw amino-acid sequence, 777 residues long: Intraflagellar transport protein 80 homolog (777 aa).

WD repeat units lie at residues 12 to 50, 104 to 143, 145 to 185, 186 to 225, 227 to 265, 267 to 306, and 504 to 542; these read KHQE…TSLI, AHCG…RSTL, QQGT…LQWK, AHDG…LYGS, PHEH…YALE, PNTG…WEWK, and KLGT…YVDR.

In terms of assembly, component of the IFT complex B, at least composed of IFT20, IFT22, IFT25, IFT27, IFT46, IFT52, TRAF3IP1/IFT54, IFT57, IFT74, IFT80, IFT81, and IFT88. Interacts with IFT88. Interacts with IFT57 and IFT70B.

The protein localises to the cytoplasm. The protein resides in the cytoskeleton. It localises to the cilium basal body. Its subcellular location is the cilium axoneme. Its function is as follows. Component of the intraflagellar transport (IFT) complex B, which is essential for the development and maintenance of motile and sensory cilia. The chain is Intraflagellar transport protein 80 homolog (Ift80) from Mus musculus (Mouse).